Consider the following 515-residue polypeptide: Anterior pharynx in excess protein 1 (515 aa).

The signal sequence occupies residues 1-26; it reads MTNFSSLLTTIFLCIISSATGSGTIE. Topologically, residues 27-392 are extracellular; it reads LLISSPQTVL…QASDELQLRL (366 aa). N-linked (GlcNAc...) asparagine glycosylation is present at asparagine 123. The DSL domain maps to 130–172; the sequence is NLCSSNYHGKRCNRYCIANAKLHWECSTHGVRRCSAGWSGEDC. Cystine bridges form between cysteine 132/cysteine 141, cysteine 145/cysteine 155, cysteine 163/cysteine 172, cysteine 177/cysteine 187, cysteine 181/cysteine 193, cysteine 195/cysteine 204, cysteine 213/cysteine 218, cysteine 228/cysteine 237, cysteine 244/cysteine 256, cysteine 250/cysteine 268, cysteine 270/cysteine 279, cysteine 288/cysteine 300, cysteine 294/cysteine 310, and cysteine 312/cysteine 321. 4 EGF-like domains span residues 173 to 205, 203 to 238, 240 to 280, and 284 to 322; these read SNPICAGGCSNRGRCVAPNQCSCADGFNGTRCE, RCEQCLPRAGCVNGDCVNETPNTCKCRDGFIGDRCD, DIKI…SQCK, and SKVRCSAEHVCKNGGACISMDDTNIQCKCRRGFSGKFCE. Asparagine 200 is a glycosylation site (N-linked (GlcNAc...) asparagine). The EGF-like 5; incomplete domain occupies 325–349; the sequence is NHGDCSAMRCSAGETCQISGDFAIC. Residues 393–413 form a helical membrane-spanning segment; it reads IAAICVLFSVCVIGLALVSFF. Residues 414–515 lie on the Cytoplasmic side of the membrane; sequence FYMHSFSKWK…AADDESSFRV (102 aa). 2 disordered regions span residues 427-452 and 466-494; these read SQQAGGSTILPTTTSIPMSTTSSGTG and RGNAPGSSSDSEPDHHCPPPHRHSPPPAY. Low complexity predominate over residues 431–452; that stretch reads GGSTILPTTTSIPMSTTSSGTG.

It localises to the cell membrane. It is found in the nucleus. Its subcellular location is the cytoplasm. Its function is as follows. Probable ligand for lin-12/Notch and glp-1/Notch receptors and involved in the mediation of Notch signaling. Involved in the lin-12/Notch pathway signaling of cell fate in vulval precursor cells (VPCs), acting redundantly with dsl-1 and lag-2. Contributes to the establishment of the dorsal-ventral axis in early embryos. Involved in the specification of the blastomere cell ABp fate, probably acting as a signal from the P2 blastomere to the glp-1/Notch receptor on ABp and ABa. Probably acts as a signal, from the secondary vulval epithelial cells and the vulval muscle type 1 (vm1) cells, to activate the lin-12/Notch pathway in type 2 vulval muscle (vm2) cells, contributing to formation of the postsynaptic muscle plasma membrane extensions, known as muscle arms. Required for oocyte growth control, acting redundantly with lag-2, perhaps signaling via the glp-1/Notch pathway. Plays a somatic role in ovulation during adulthood, perhaps via lin-12/Notch signaling. Involved in establishing left-right asymmetry during intestinal organogenesis. The sequence is that of Anterior pharynx in excess protein 1 (apx-1) from Caenorhabditis elegans.